The primary structure comprises 357 residues: UPF0283 membrane protein BCAN_A1047 (357 aa).

The interval 1 to 36 (MSDKTPRKPTAFRLEQPARVSAASEQEEPRRPRAVK) is disordered. A compositionally biased stretch (basic and acidic residues) spans 27 to 36 (EEPRRPRAVK). A run of 2 helical transmembrane segments spans residues 78-98 (ILFGALGILVSFAIGIWTEDL) and 109-129 (LGWTALGVAMVALAAFAAIIL).

This sequence belongs to the UPF0283 family.

It localises to the cell inner membrane. The polypeptide is UPF0283 membrane protein BCAN_A1047 (Brucella canis (strain ATCC 23365 / NCTC 10854 / RM-666)).